We begin with the raw amino-acid sequence, 445 residues long: MAVAIAAARVWRLNRGLSQAALLLLRQPGARGLARSHPPRQQQQFSSLDDKPQFPGASAEFIDKLEFIQPNVISGIPIYRVMDRQGQIINPSEDPHLPKEKVLKLYKSMTLLNTMDRILYESQRQGRISFYMTNYGEEGTHVGSAAALDNTDLVFGQYREAGVLMYRDYPLELFMAQCYGNISDLGKGRQMPVHYGCKERHFVTISSPLATQIPQAVGAAYAAKRANANRVVICYFGEGAASEGDAHAGFNFAATLECPIIFFCRNNGYAISTPTSEQYRGDGIAARGPGYGIMSIRVDGNDVFAVYNATKEARRRAVAENQPFLIEAMTYRIGHHSTSDDSSAYRSVDEVNYWDKQDHPISRLRHYLLSQGWWDEEQEKAWRKQSRRKVMEAFEQAERKPKPNPNLLFSDVYQEMPAQLRKQQESLARHLQTYGEHYPLDHFDK.

Residues 1-45 (MAVAIAAARVWRLNRGLSQAALLLLRQPGARGLARSHPPRQQQQF) constitute a mitochondrion transit peptide. The segment at 33–52 (LARSHPPRQQQQFSSLDDKP) is disordered. Residues Tyr158 and Arg159 each coordinate thiamine diphosphate. Ser206 is a K(+) binding site. Residue Ser207 coordinates thiamine diphosphate. Positions 208, 211, and 212 each coordinate K(+). Glu238 serves as a coordination point for Mg(2+). Residues Gly239, Ala240, and Arg265 each contribute to the thiamine diphosphate site. Residues Asn267 and Tyr269 each coordinate Mg(2+). His336 contacts thiamine diphosphate. Ser337 carries the phosphoserine; by BCKDK modification. A Phosphothreonine modification is found at Thr338. Residues Ser339 and Ser347 each carry the phosphoserine modification. Residue Lys356 is modified to N6-acetyllysine; alternate. Lys356 is subject to N6-succinyllysine; alternate. N6-succinyllysine is present on Lys380.

It belongs to the BCKDHA family. Heterotetramer of 2 alpha/BCKDHA and 2 beta chains/BCKDHB that forms the branched-chain alpha-keto acid decarboxylase (E1) component of the BCKD complex. The branched-chain alpha-ketoacid dehydrogenase is a large complex composed of three major building blocks E1, E2 and E3. It is organized around E2, a 24-meric cubic core composed of DBT, to which are associated 6 to 12 copies of E1, and approximately 6 copies of the dehydrogenase E3, a DLD dimer. Interacts with PPM1K. Requires thiamine diphosphate as cofactor. The cofactor is Mg(2+). Post-translationally, phosphorylated at Ser-337 by BCKDK and dephosphorylated by protein phosphatase PPM1K.

The protein resides in the mitochondrion matrix. It carries out the reaction N(6)-[(R)-lipoyl]-L-lysyl-[protein] + 3-methyl-2-oxobutanoate + H(+) = N(6)-[(R)-S(8)-2-methylpropanoyldihydrolipoyl]-L-lysyl-[protein] + CO2. Its function is as follows. Together with BCKDHB forms the heterotetrameric E1 subunit of the mitochondrial branched-chain alpha-ketoacid dehydrogenase (BCKD) complex. The BCKD complex catalyzes the multi-step oxidative decarboxylation of alpha-ketoacids derived from the branched-chain amino-acids valine, leucine and isoleucine producing CO2 and acyl-CoA which is subsequently utilized to produce energy. The E1 subunit catalyzes the first step with the decarboxylation of the alpha-ketoacid forming an enzyme-product intermediate. A reductive acylation mediated by the lipoylamide cofactor of E2 extracts the acyl group from the E1 active site for the next step of the reaction. The sequence is that of 2-oxoisovalerate dehydrogenase subunit alpha, mitochondrial from Homo sapiens (Human).